We begin with the raw amino-acid sequence, 351 residues long: Large ribosomal subunit protein uL3 (351 aa).

Disordered regions lie at residues 1–31 (MGHR…TPRT) and 246–271 (KGSR…GQLG).

It belongs to the universal ribosomal protein uL3 family. In terms of assembly, part of the 50S ribosomal subunit. Forms a cluster with proteins L14 and L24e.

Functionally, one of the primary rRNA binding proteins, it binds directly near the 3'-end of the 23S rRNA, where it nucleates assembly of the 50S subunit. This Saccharolobus solfataricus (strain ATCC 35092 / DSM 1617 / JCM 11322 / P2) (Sulfolobus solfataricus) protein is Large ribosomal subunit protein uL3.